The following is a 797-amino-acid chain: MAHRCLRLWGRGGCWPRGLQQLLVPGGVGPGEQPCLRTLYRFVTTQARASRNSLLTDIIAAYQRFCSRPPKGFEKYFPNGKNGKKASEPKEVMGEKKESKPAATTRSSGGGGGGGGKRGGKKDDSHWWSRFQKGDIPWDDKDFRMFFLWTALFWGGVMFYLLLKRSGREITWKDFVNNYLSKGVVDRLEVVNKRFVRVTFTPGKTPVDGQYVWFNIGSVDTFERNLETLQQELGIEGENRVPVVYIAESDGSFLLSMLPTVLIIAFLLYTIRRGPAGIGRTGRGMGGLFSVGETTAKVLKDEIDVKFKDVAGCEEAKLEIMEFVNFLKNPKQYQDLGAKIPKGAILTGPPGTGKTLLAKATAGEANVPFITVSGSEFLEMFVGVGPARVRDLFALARKNAPCILFIDEIDAVGRKRGRGNFGGQSEQENTLNQLLVEMDGFNTTTNVVILAGTNRPDILDPALLRPGRFDRQIFIGPPDIKGRASIFKVHLRPLKLDSTLEKDKLARKLASLTPGFSGADVANVCNEAALIAARHLSDSINQKHFEQAIERVIGGLEKKTQVLQPEEKKTVAYHEAGHAVAGWYLEHADPLLKVSIIPRGKGLGYAQYLPKEQYLYTKEQLLDRMCMTLGGRVSEEIFFGRITTGAQDDLRKVTQSAYAQIVQFGMNEKVGQISFDLPRQGDMVLEKPYSEATARLIDDEVRILINDAYKRTVALLTEKKADVEKVALLLLEKEVLDKNDMVELLGPRPFAEKSTYEEFVEGTGSLDEDTSLPEGLKDWNKEREKEKEEPPGEKVAN.

The N-terminal 38 residues, 1 to 38 (MAHRCLRLWGRGGCWPRGLQQLLVPGGVGPGEQPCLRT), are a transit peptide targeting the mitochondrion. The propeptide at 39–66 (LYRFVTTQARASRNSLLTDIIAAYQRFC) is removed in mature form. At 39–142 (LYRFVTTQAR…KGDIPWDDKD (104 aa)) the chain is on the mitochondrial matrix side. Residues 76–126 (YFPNGKNGKKASEPKEVMGEKKESKPAATTRSSGGGGGGGGKRGGKKDDSH) are disordered. Over residues 85-100 (KASEPKEVMGEKKESK) the composition is skewed to basic and acidic residues. A compositionally biased stretch (gly residues) spans 108-117 (SGGGGGGGGK). K117 carries the post-translational modification N6-succinyllysine. Residues 143–163 (FRMFFLWTALFWGGVMFYLLL) form a helical membrane-spanning segment. Topologically, residues 164-250 (KRSGREITWK…VPVVYIAESD (87 aa)) are mitochondrial intermembrane. A helical membrane pass occupies residues 251-271 (GSFLLSMLPTVLIIAFLLYTI). At 272–797 (RRGPAGIGRT…EEPPGEKVAN (526 aa)) the chain is on the mitochondrial matrix side. ATP-binding residues include V310, A311, T352, G353, K354, T355, L356, and H490. H574 is a Zn(2+) binding site. E575 is an active-site residue. The Zn(2+) site is built by H578 and D649. The tract at residues 759–797 (FVEGTGSLDEDTSLPEGLKDWNKEREKEKEEPPGEKVAN) is disordered. Over residues 775-797 (GLKDWNKEREKEKEEPPGEKVAN) the composition is skewed to basic and acidic residues.

The protein in the N-terminal section; belongs to the AAA ATPase family. In the C-terminal section; belongs to the peptidase M41 family. As to quaternary structure, homohexamer. Forms heterohexamers with SPG7. The m-AAA protease is either composed of homohexamers of AFG3L2 or heterohexamers of AFG3L2 and SPG7. Interacts with MAIP1. Interacts with DNAJC19. Interacts with PHB2. The cofactor is Zn(2+). In terms of processing, upon import into the mitochondrion, the N-terminal transit peptide is cleaved to generate an intermediate form which undergoes autocatalytic proteolytic processing to generate the proteolytically active mature form. As to expression, ubiquitous. Highly expressed in the cerebellar Purkinje cells.

The protein resides in the mitochondrion inner membrane. It catalyses the reaction ATP + H2O = ADP + phosphate + H(+). In terms of biological role, catalytic component of the m-AAA protease, a protease that plays a key role in proteostasis of inner mitochondrial membrane proteins, and which is essential for axonal and neuron development. AFG3L2 possesses both ATPase and protease activities: the ATPase activity is required to unfold substrates, threading them into the internal proteolytic cavity for hydrolysis into small peptide fragments. The m-AAA protease carries out quality control in the inner membrane of the mitochondria by mediating degradation of mistranslated or misfolded polypeptides. The m-AAA protease complex also promotes the processing and maturation of mitochondrial proteins, such as MRPL32/bL32m, PINK1 and SP7. Mediates protein maturation of the mitochondrial ribosomal subunit MRPL32/bL32m by catalyzing the cleavage of the presequence of MRPL32/bL32m prior to assembly into the mitochondrial ribosome. Required for SPG7 maturation into its active mature form after SPG7 cleavage by mitochondrial-processing peptidase (MPP). Required for the maturation of PINK1 into its 52kDa mature form after its cleavage by mitochondrial-processing peptidase (MPP). Acts as a regulator of calcium in neurons by mediating degradation of SMDT1/EMRE before its assembly with the uniporter complex, limiting the availability of SMDT1/EMRE for MCU assembly and promoting efficient assembly of gatekeeper subunits with MCU. Promotes the proteolytic degradation of GHITM upon hyperpolarization of mitochondria: progressive GHITM degradation leads to respiratory complex I degradation and broad reshaping of the mitochondrial proteome by AFG3L2. Also acts as a regulator of mitochondrial glutathione homeostasis by mediating cleavage and degradation of SLC25A39. SLC25A39 cleavage is prevented when SLC25A39 binds iron-sulfur. Involved in the regulation of OMA1-dependent processing of OPA1. May act by mediating processing of OMA1 precursor, participating in OMA1 maturation. The protein is Mitochondrial inner membrane m-AAA protease component AFG3L2 of Homo sapiens (Human).